Consider the following 318-residue polypeptide: Acetylglutamate kinase (318 aa).

Substrate is bound by residues 80–81, R102, and N203; that span reads GG.

The protein belongs to the acetylglutamate kinase family. ArgB subfamily.

It localises to the cytoplasm. It carries out the reaction N-acetyl-L-glutamate + ATP = N-acetyl-L-glutamyl 5-phosphate + ADP. It functions in the pathway amino-acid biosynthesis; L-arginine biosynthesis; N(2)-acetyl-L-ornithine from L-glutamate: step 2/4. Functionally, catalyzes the ATP-dependent phosphorylation of N-acetyl-L-glutamate. The protein is Acetylglutamate kinase of Bifidobacterium adolescentis (strain ATCC 15703 / DSM 20083 / NCTC 11814 / E194a).